The primary structure comprises 931 residues: Short transient receptor potential channel 6 (931 aa).

The span at M1 to A23 shows a compositional bias: low complexity. Residues M1–N26 are disordered. Residues M1–G438 lie on the Cytoplasmic side of the membrane. ANK repeat units follow at residues I97–V126, M132–V161, D163–G189, and H218–R247. The chain crosses the membrane as a helical span at residues P439–M459. Topologically, residues N460 to K487 are extracellular. Residue N473 is glycosylated (N-linked (GlcNAc...) asparagine). The chain crosses the membrane as a helical span at residues T488–A508. At E509–Y521 the chain is on the cytoplasmic side. A helical membrane pass occupies residues L522–I542. Over A543 to Q592 the chain is Extracellular. A glycan (N-linked (GlcNAc...) asparagine) is linked at N561. The helical transmembrane segment at I593 to I613 threads the bilayer. The Cytoplasmic segment spans residues L614–K636. A helical membrane pass occupies residues F637 to S657. Residues Y658–V706 are Extracellular-facing. A helical transmembrane segment spans residues L707–I727. Topologically, residues N728–R931 are cytoplasmic. The residue at position 815 (S815) is a Phosphoserine.

This sequence belongs to the transient receptor (TC 1.A.4) family. STrpC subfamily. TRPC6 sub-subfamily. Homodimer; forms channel complex. Interacts with MX1 and RNF24. In terms of processing, phosphorylated by FYN, leading to an increase of TRPC6 channel activity. As to expression, expressed primarily in placenta, lung, spleen, ovary and small intestine. Expressed in podocytes and is a component of the glomerular slit diaphragm.

Its subcellular location is the cell membrane. The enzyme catalyses Ca(2+)(in) = Ca(2+)(out). With respect to regulation, activated by diacylglycerol (DAG) in a membrane-delimited fashion, independently of protein kinase C. Its function is as follows. Forms a receptor-activated non-selective calcium permeant cation channel. Probably is operated by a phosphatidylinositol second messenger system activated by receptor tyrosine kinases or G-protein coupled receptors. Activated by diacylglycerol (DAG) in a membrane-delimited fashion, independently of protein kinase C. Seems not to be activated by intracellular calcium store depletion. In Homo sapiens (Human), this protein is Short transient receptor potential channel 6.